The primary structure comprises 188 residues: dCTP deaminase (188 aa).

Residues 111–116 (KSTYAR), 135–137 (TLE), glutamine 156, tyrosine 170, and glutamine 180 contribute to the dCTP site. Glutamate 137 functions as the Proton donor/acceptor in the catalytic mechanism.

Belongs to the dCTP deaminase family. Homotrimer.

The catalysed reaction is dCTP + H2O + H(+) = dUTP + NH4(+). It participates in pyrimidine metabolism; dUMP biosynthesis; dUMP from dCTP (dUTP route): step 1/2. Functionally, catalyzes the deamination of dCTP to dUTP. The protein is dCTP deaminase of Acidithiobacillus ferrooxidans (strain ATCC 23270 / DSM 14882 / CIP 104768 / NCIMB 8455) (Ferrobacillus ferrooxidans (strain ATCC 23270)).